The sequence spans 294 residues: Acetyl-coenzyme A carboxylase carboxyl transferase subunit beta (294 aa).

Residues 27-294 enclose the CoA carboxyltransferase N-terminal domain; the sequence is LWHKCPSCDA…PSPVALPVTA (268 aa). Positions 31, 34, 50, and 53 each coordinate Zn(2+). Residues 31-53 form a C4-type zinc finger; the sequence is CPSCDAVLYRPELEKTLDVCPKC.

The protein belongs to the AccD/PCCB family. In terms of assembly, acetyl-CoA carboxylase is a heterohexamer composed of biotin carboxyl carrier protein (AccB), biotin carboxylase (AccC) and two subunits each of ACCase subunit alpha (AccA) and ACCase subunit beta (AccD). The cofactor is Zn(2+).

It localises to the cytoplasm. It catalyses the reaction N(6)-carboxybiotinyl-L-lysyl-[protein] + acetyl-CoA = N(6)-biotinyl-L-lysyl-[protein] + malonyl-CoA. It participates in lipid metabolism; malonyl-CoA biosynthesis; malonyl-CoA from acetyl-CoA: step 1/1. In terms of biological role, component of the acetyl coenzyme A carboxylase (ACC) complex. Biotin carboxylase (BC) catalyzes the carboxylation of biotin on its carrier protein (BCCP) and then the CO(2) group is transferred by the transcarboxylase to acetyl-CoA to form malonyl-CoA. The protein is Acetyl-coenzyme A carboxylase carboxyl transferase subunit beta of Ectopseudomonas mendocina (strain ymp) (Pseudomonas mendocina).